The following is a 484-amino-acid chain: Glutamyl-tRNA(Gln) amidotransferase subunit A (484 aa).

Residues K77 and S152 each act as charge relay system in the active site. S176 serves as the catalytic Acyl-ester intermediate.

Belongs to the amidase family. GatA subfamily. Heterotrimer of A, B and C subunits.

The enzyme catalyses L-glutamyl-tRNA(Gln) + L-glutamine + ATP + H2O = L-glutaminyl-tRNA(Gln) + L-glutamate + ADP + phosphate + H(+). Allows the formation of correctly charged Gln-tRNA(Gln) through the transamidation of misacylated Glu-tRNA(Gln) in organisms which lack glutaminyl-tRNA synthetase. The reaction takes place in the presence of glutamine and ATP through an activated gamma-phospho-Glu-tRNA(Gln). This Pseudomonas aeruginosa (strain ATCC 15692 / DSM 22644 / CIP 104116 / JCM 14847 / LMG 12228 / 1C / PRS 101 / PAO1) protein is Glutamyl-tRNA(Gln) amidotransferase subunit A.